The sequence spans 1032 residues: Y' element ATP-dependent helicase YPR204W (1032 aa).

The 175-residue stretch at 1–175 (MADTPSVAVQ…LQRIGLTGLA (175 aa)) folds into the Helicase ATP-binding domain. ATP is bound at residue 11–18 (APPGYGKT). Residues 121–124 (DEFH) carry the DEAH box motif. The Helicase C-terminal domain occupies 232–381 (KLLLALFEIE…EFYGLESKKG (150 aa)). Over residues 455 to 634 (ANASTNATTN…ATTTESTNAS (180 aa)) the composition is skewed to low complexity. Residues 455–658 (ANASTNATTN…RFHPVTDINK (204 aa)) form a disordered region. Positions 635 to 658 (AKEDANKDGNAEDNRFHPVTDINK) are enriched in basic and acidic residues.

Belongs to the helicase family. Yeast subtelomeric Y' repeat subfamily.

In terms of biological role, catalyzes DNA unwinding and is involved in telomerase-independent telomere maintenance. The protein is Y' element ATP-dependent helicase YPR204W of Saccharomyces cerevisiae (strain ATCC 204508 / S288c) (Baker's yeast).